Reading from the N-terminus, the 101-residue chain is MAKNSMVERDRKRRKLAQKYSAKRERLKAIIESPESSVEERFEAQLKLQQIPRNASPVRQRNRCAKSGRPRGYYRKFGLARNELRRAAMNGEIPGLTLSSW.

The span at 1 to 10 (MAKNSMVERD) shows a compositional bias: basic and acidic residues. The disordered stretch occupies residues 1 to 20 (MAKNSMVERDRKRRKLAQKY).

This sequence belongs to the universal ribosomal protein uS14 family. Part of the 30S ribosomal subunit. Contacts proteins S3 and S10.

Its function is as follows. Binds 16S rRNA, required for the assembly of 30S particles and may also be responsible for determining the conformation of the 16S rRNA at the A site. In Halorhodospira halophila (strain DSM 244 / SL1) (Ectothiorhodospira halophila (strain DSM 244 / SL1)), this protein is Small ribosomal subunit protein uS14.